The chain runs to 435 residues: Virulence factor PIT1 (435 aa).

Helical transmembrane passes span 33–53 (ETTT…SEVI), 77–97 (IFFI…ILVT), 111–131 (WAWT…CVIG), 143–163 (VASW…MWTN), and 204–224 (TFWF…ACCI). An N-linked (GlcNAc...) asparagine glycan is attached at Asn-330. Residues 392–404 (SPQMPSKAQSQSI) are compositionally biased toward polar residues. The disordered stretch occupies residues 392–435 (SPQMPSKAQSQSIPYKREVEVTVDMSPVPPPPGPSPAPLPAPYM). A compositionally biased stretch (pro residues) spans 418-435 (PVPPPPGPSPAPLPAPYM).

O-mannosylated by PMT4. Is also N-glycosylated.

The protein localises to the cell membrane. Functionally, plasma membrane virulence factor required for spreading and inducing tumors in infected leaves. This Mycosarcoma maydis (Corn smut fungus) protein is Virulence factor PIT1.